A 207-amino-acid polypeptide reads, in one-letter code: Outer-membrane lipoprotein LolB (207 aa).

The first 21 residues, 1–21 (MTLPDFRLIRLLPLASLVLTA), serve as a signal peptide directing secretion. Cys-22 carries the N-palmitoyl cysteine lipid modification. The S-diacylglycerol cysteine moiety is linked to residue Cys-22.

The protein belongs to the LolB family. As to quaternary structure, monomer.

Its subcellular location is the cell outer membrane. Plays a critical role in the incorporation of lipoproteins in the outer membrane after they are released by the LolA protein. The protein is Outer-membrane lipoprotein LolB of Salmonella schwarzengrund (strain CVM19633).